The sequence spans 313 residues: Ribosomal RNA small subunit methyltransferase H (313 aa).

S-adenosyl-L-methionine-binding positions include 35-37 (GGH), aspartate 55, phenylalanine 79, aspartate 101, and glutamine 108. The disordered stretch occupies residues 276 to 300 (QGGPTLKSVGKMMPPDDEVADNPRA).

The protein belongs to the methyltransferase superfamily. RsmH family.

It localises to the cytoplasm. The enzyme catalyses cytidine(1402) in 16S rRNA + S-adenosyl-L-methionine = N(4)-methylcytidine(1402) in 16S rRNA + S-adenosyl-L-homocysteine + H(+). In terms of biological role, specifically methylates the N4 position of cytidine in position 1402 (C1402) of 16S rRNA. The sequence is that of Ribosomal RNA small subunit methyltransferase H from Dickeya chrysanthemi (strain Ech1591) (Dickeya zeae (strain Ech1591)).